Consider the following 498-residue polypeptide: Fascin-3 (498 aa).

This sequence belongs to the fascin family. As to expression, expressed in testis.

Its subcellular location is the cytoplasm. It localises to the cytoskeleton. Functionally, acts as an actin bundling protein. The protein is Fascin-3 (FSCN3) of Homo sapiens (Human).